The primary structure comprises 672 residues: COBRA-like protein 10 (672 aa).

The signal sequence occupies residues 1 to 35 (MRAIDVKTGMKIPWDVRYSLSLFIFLSSILFLSNG). Asn-79, Asn-135, Asn-264, Asn-328, Asn-339, Asn-368, Asn-422, Asn-442, Asn-483, Asn-562, Asn-570, and Asn-589 each carry an N-linked (GlcNAc...) asparagine glycan. Residues 502-607 (KLPCPDNCGV…PVPGKQQSVI (106 aa)) enclose the CBM2 domain. The GPI-anchor amidated serine moiety is linked to residue Ser-646. Positions 647–672 (SGHRRGISVSMSFVFATIAAFALMMD) are cleaved as a propeptide — removed in mature form. The short motif at 664–672 (IAAFALMMD) is the Required for processing by the PIG complex, a critical step for apical plasma membrane localization in pollen tubes element.

This sequence belongs to the COBRA family. In terms of processing, the GPI-anchor attachment at Ser-646 requires APTG1. In terms of tissue distribution, expressed in roots, stems, leaves, flowers and siliques. Specific expression in the pollen tube.

The protein resides in the cell membrane. Its subcellular location is the cytoplasm. It is found in the vesicle. Involved in the deposition of apical pectin cap and cellulose microfibrils in pollen tubes. Not essential for pollen development, hydration or germination, but required for pollen tubes growth in the female transmitting tract of pistil and toward micropyles, via the perception of ovule guidance cues. This chain is COBRA-like protein 10, found in Arabidopsis thaliana (Mouse-ear cress).